The sequence spans 467 residues: Dynactin subunit 4 (467 aa).

Ala-2 is subject to N-acetylalanine. Residue Lys-222 forms a Glycyl lysine isopeptide (Lys-Gly) (interchain with G-Cter in SUMO2) linkage. Residue Thr-414 is modified to Phosphothreonine.

Belongs to the dynactin subunit 4 family. In terms of assembly, subunit of dynactin, a multiprotein complex part of a tripartite complex with dynein and a adapter, such as BICDL1, BICD2 or HOOK3. The dynactin complex is built around ACTR1A/ACTB filament and consists of an actin-related filament composed of a shoulder domain, a pointed end and a barbed end. Its length is defined by its flexible shoulder domain. The soulder is composed of 2 DCTN1 subunits, 4 DCTN2 and 2 DCTN3. The 4 DCNT2 (via N-terminus) bind the ACTR1A filament and act as molecular rulers to determine the length. The pointed end is important for binding dynein-dynactin cargo adapters. Consists of 4 subunits: ACTR10, DCNT4, DCTN5 and DCTN6. The barbed end is composed of a CAPZA1:CAPZB heterodimers, which binds ACTR1A/ACTB filament and dynactin and stabilizes dynactin. Interacts with ATP7B, but not ATP7A, in a copper-dependent manner. Interacts with ANK2; this interaction is required for localization at costameres. Interacts with N4BP2L1.

The protein localises to the cytoplasm. The protein resides in the cytoskeleton. It is found in the microtubule organizing center. It localises to the centrosome. Its subcellular location is the stress fiber. The protein localises to the cell cortex. The protein resides in the myofibril. It is found in the sarcomere. In terms of biological role, part of the dynactin complex that activates the molecular motor dynein for ultra-processive transport along microtubules. Together with dynein is involved in spindle assembly and cytokinesis. The sequence is that of Dynactin subunit 4 (DCTN4) from Sus scrofa (Pig).